Consider the following 486-residue polypeptide: Malonate-semialdehyde dehydrogenase (486 aa).

NAD(+) contacts are provided by Phe-154, Lys-178, Glu-181, Arg-182, and Ser-231. Cys-286 serves as the catalytic Nucleophile. An NAD(+)-binding site is contributed by Glu-386.

Belongs to the aldehyde dehydrogenase family. IolA subfamily. In terms of assembly, homotetramer.

It carries out the reaction 3-oxopropanoate + NAD(+) + CoA + H2O = hydrogencarbonate + acetyl-CoA + NADH + H(+). The catalysed reaction is 2-methyl-3-oxopropanoate + NAD(+) + CoA + H2O = propanoyl-CoA + hydrogencarbonate + NADH + H(+). The protein operates within polyol metabolism; myo-inositol degradation into acetyl-CoA; acetyl-CoA from myo-inositol: step 7/7. Catalyzes the oxidation of malonate semialdehyde (MSA) and methylmalonate semialdehyde (MMSA) into acetyl-CoA and propanoyl-CoA, respectively. Is involved in a myo-inositol catabolic pathway. Bicarbonate, and not CO2, is the end-product of the enzymatic reaction. This is Malonate-semialdehyde dehydrogenase from Bacillus cereus (strain ATCC 10987 / NRS 248).